The primary structure comprises 817 residues: TPR repeat-containing protein C19B12.01 (817 aa).

2 disordered regions span residues 276-298 (DQKS…PNHP) and 386-413 (GKSP…DGEN). TPR repeat units follow at residues 459 to 492 (LQMW…DPYD), 521 to 554 (APAQ…NPLS), 555 to 588 (YPTW…NPED), and 625 to 658 (WRIW…KGKD).

This Schizosaccharomyces pombe (strain 972 / ATCC 24843) (Fission yeast) protein is TPR repeat-containing protein C19B12.01.